We begin with the raw amino-acid sequence, 326 residues long: MHRTTRIKITELNPHLMCVLCGGYFIDATTIIECLHSFCKTCIVRYLETSKYCPICDVQVHKTRPLLNIRSDKTLQDIVYKLVPGLFKNEMKRRRDFYAAHPSADAANGSNEDRGEVADEDKRIITDDEIISLSIEFFDQNRLDRKVNKDKEKSKEEVNDKRYLRCPAAMTVMHLRKFLRSKMDIPNTFQIDVMYEEEPLKDYYTLMDIAYIYTWRRNGPLPLKYRVRPTCKRMKISHQRDGLTNAGELESDSGSDKANSPAGGIPSTSSCLPSPSTPVQSPHPQFPHISSTMNGTSNSPSGNHQSSFANRPRKSSVNGSSATSSG.

The segment at 18–57 (CVLCGGYFIDATTIIECLHSFCKTCIVRYLETSKYCPICD) adopts an RING-type zinc-finger fold. A Nuclear localization signal motif is present at residues 81–95 (KLVPGLFKNEMKRRR). The tract at residues 162–182 (RYLRCPAAMTVMHLRKFLRSK) is interaction with PHC2. Residues 164 to 228 (LRCPAAMTVM…GPLPLKYRVR (65 aa)) form an interaction with E4F1 region. The interval 236 to 326 (ISHQRDGLTN…VNGSSATSSG (91 aa)) is disordered. Low complexity predominate over residues 266-278 (PSTSSCLPSPSTP). The span at 279 to 309 (VQSPHPQFPHISSTMNGTSNSPSGNHQSSFA) shows a compositional bias: polar residues. Low complexity predominate over residues 315–326 (SSVNGSSATSSG).

Component of a PRC1-like complex. Identified in a PRC1-like HPRC-H complex with CBX2, CBX4, CBX8, PHC1, PHC2, PHC3 RING1 and RNF2. Interacts with RNF2/RING2. Interacts with RING1. Part of a complex that contains RNF2, UB2D3 and BMI1, where RNF2 and BMI1 form a tight heterodimer, and UB2D3 interacts only with RNF2. The complex composed of RNF2, UB2D3 and BMI1 binds nucleosomes, and has activity only with nucleosomal histone H2A. Interacts with CBX7 and CBX8. Interacts with SPOP. Part of a complex consisting of BMI1, CUL3 and SPOP. Interacts with E4F1. Interacts with PHC2. Interacts with zinc finger protein ZNF277. May be part of a complex including at least ZNF277, BMI1 and RNF2/RING2. Monoubiquitinated. May be polyubiquitinated; which does not lead to proteasomal degradation.

It is found in the nucleus. Its subcellular location is the cytoplasm. Its function is as follows. Component of a Polycomb group (PcG) multiprotein PRC1-like complex, a complex class required to maintain the transcriptionally repressive state of many genes, including Hox genes, throughout development. PcG PRC1 complex acts via chromatin remodeling and modification of histones; it mediates monoubiquitination of histone H2A 'Lys-119', rendering chromatin heritably changed in its expressibility. The complex composed of RNF2, UB2D3 and BMI1 binds nucleosomes, and has activity only with nucleosomal histone H2A. In the PRC1-like complex, regulates the E3 ubiquitin-protein ligase activity of RNF2/RING2. The sequence is that of Polycomb complex protein BMI-1 (BMI1) from Homo sapiens (Human).